We begin with the raw amino-acid sequence, 1565 residues long: Major cell-surface adhesin PAc (1565 aa).

Residues 1–38 (MKVKKTYGFRKSKISKTLCGAVLGTVAAVSVAGQKVFA) form the signal peptide. Over residues 42-54 (TTTSDVDTKVVGT) the composition is skewed to low complexity. Positions 42 to 81 (TTTSDVDTKVVGTQTGNPATNLPEAQGSASKEAEQSQTKL) are disordered. Positions 72–81 (KEAEQSQTKL) are enriched in basic and acidic residues. Ag I/II A repeat units follow at residues 146–220 (KKTT…QKTN), 221–302 (AANQ…QEAN), 303–384 (AANE…KKAN), and 385–466 (AANE…QKDL). Residues 203–448 (EAKLAQYQAD…KRNADAKADY (246 aa)) are heptad repeats of Y-[EQ]-X-X-L-A-X. A V-region (lectin-like) region spans residues 461–834 (KYQKDLADYP…VNVPKVTKEK (374 aa)). Disordered stretches follow at residues 827–985 (VPKV…PTPP) and 1486–1511 (NTVK…PRTS). One copy of the P1 repeat lies at 848 to 887 (TYETEKPLKPAPVAPNYEKEPTPPTRTPDQAEPNKPTPPT). The stretch at 888 to 926 (YETEKPLEPAPVEPSYEAEPTPPTRTPDQAEPNKPTPPT) is one P2 repeat. One copy of the P3 repeat lies at 927–964 (YETEKPLEPAPVEPSYEAEPTPPTPTPDQPEPNKPVEP). A compositionally biased stretch (pro residues) spans 946-961 (PTPPTPTPDQPEPNKP). The LPXTG sorting signal motif lies at 1532-1536 (LPNTG). At Thr1535 the chain carries Pentaglycyl murein peptidoglycan amidated threonine. Positions 1536 to 1565 (GVTNNAYMPLLGIIGLVTSFSLLGLKAKKD) are cleaved as a propeptide — removed by sortase.

Belongs to the antigen I/II family.

Its subcellular location is the secreted. It is found in the cell wall. In terms of biological role, surface protein antigen implicated in dental caries. The sequence is that of Major cell-surface adhesin PAc from Streptococcus mutans.